We begin with the raw amino-acid sequence, 426 residues long: UPF0229 protein Csal_0882 (426 aa).

The span at 82–93 (FVEGDRLRRPGG) shows a compositional bias: basic and acidic residues. Residues 82–109 (FVEGDRLRRPGGEGRGGSGEGSASNQGE) form a disordered region.

This sequence belongs to the UPF0229 family.

This Chromohalobacter salexigens (strain ATCC BAA-138 / DSM 3043 / CIP 106854 / NCIMB 13768 / 1H11) protein is UPF0229 protein Csal_0882.